The sequence spans 258 residues: UPF0246 protein mma_1385 (258 aa).

It belongs to the UPF0246 family.

The sequence is that of UPF0246 protein mma_1385 from Janthinobacterium sp. (strain Marseille) (Minibacterium massiliensis).